Here is a 155-residue protein sequence, read N- to C-terminus: Nascent polypeptide-associated complex subunit beta (155 aa).

2 disordered regions span residues 1 to 35 (MDQA…SGAD) and 116 to 155 (LAES…SNVE). The segment covering 20 to 30 (TPRRKVKKVHK) has biased composition (basic residues). The region spanning 33–98 (GADDKKLQAT…GEEKELTELV (66 aa)) is the NAC-A/B domain. A compositionally biased stretch (acidic residues) spans 136 to 155 (DEEDDIPDLVEGENFESNVE).

Belongs to the NAC-beta family. As to quaternary structure, part of the nascent polypeptide-associated complex (NAC), consisting of egd2 and egd1. NAC associates with ribosomes via egd1.

It localises to the cytoplasm. The protein resides in the nucleus. Component of the nascent polypeptide-associated complex (NAC), a dynamic component of the ribosomal exit tunnel, protecting the emerging polypeptides from interaction with other cytoplasmic proteins to ensure appropriate nascent protein targeting. The NAC complex also promotes mitochondrial protein import by enhancing productive ribosome interactions with the outer mitochondrial membrane and blocks the inappropriate interaction of ribosomes translating non-secretory nascent polypeptides with translocation sites in the membrane of the endoplasmic reticulum. EGD1 may act as a transcription factor that exert a negative effect on the expression of several genes that are transcribed by RNA polymerase II. The polypeptide is Nascent polypeptide-associated complex subunit beta (egd1) (Aspergillus niger (strain ATCC MYA-4892 / CBS 513.88 / FGSC A1513)).